The following is a 357-amino-acid chain: Multiple sugar-binding periplasmic protein SbpA (357 aa).

Residues 1–20 (MSSSFTTTLAGMAVGMLVLA) form the signal peptide.

Belongs to the bacterial solute-binding protein 2 family.

Its subcellular location is the periplasm. In terms of biological role, mediates chemotaxis towards D-galactose, L-arabinose and D-fucose but not towards D-fructose. Probably part of a binding-protein high affinity uptake system. This is Multiple sugar-binding periplasmic protein SbpA (sbpA) from Azospirillum brasilense.